The chain runs to 475 residues: F-box/kelch-repeat protein At1g22040 (475 aa).

The interval 1 to 28 is disordered; it reads MGSVMSLSCSKRKATSQDVECSSESRKR. The F-box domain occupies 41-87; that stretch reads CRLIPSLPDELSIQILARLPRICYSSVRLVSRRWRSAVSTSEVYSLR. 5 Kelch repeats span residues 94–140, 182–228, 229–279, 306–350, and 352–401; these read EEWL…KSLS, GLYV…VLNK, KLYV…AFLA, PFFV…VDGE, and YAFD…GFHG.

The sequence is that of F-box/kelch-repeat protein At1g22040 from Arabidopsis thaliana (Mouse-ear cress).